The primary structure comprises 393 residues: MACSSSLSSKWASWGASSRPHPSVQPFVTRKNVVRYHKPTSELSYSPLTTTLSSNLDSQFMQVYETLKSELIHDPSFEFDDDSRQWVERMIDYNVPGGKMVRGYSVVDSYQLLKGEELTEDEAFLACALGWCTEWLQAFILVLDDIMDGSHTRRGQPCWFRLPEVGVVAINDGVLLRNHVHRILKKYFQGKPYYVHLLDLFNETEFQTISGQMIDTICRLAGQKDLSKYTMTLNRRIVQYKGSYYSCYLPIACALLMFGENLEDHVQVKDILVELGMYYQIQNDYLDTFGDPDVFGKTGTDIEECKCSWLIAKALELANEEQKKILSENYGINDPSKVAKVKELYHALDLKGAYEDYETNLYETSMTSIKAHPNIAVQAVLKSCLEKMYKGHK.

The span at 1–18 (MACSSSLSSKWASWGASS) shows a compositional bias: low complexity. A disordered region spans residues 1-22 (MACSSSLSSKWASWGASSRPHP). The N-terminal 53 residues, 1-53 (MACSSSLSSKWASWGASSRPHPSVQPFVTRKNVVRYHKPTSELSYSPLTTTLS), are a transit peptide targeting the chloroplast. Lys99, Arg102, and Gln137 together coordinate dimethylallyl diphosphate. 2 residues coordinate Mg(2+): Asp144 and Asp148. 7 residues coordinate dimethylallyl diphosphate: Arg153, Arg154, Lys241, Gln280, Asp287, Lys297, and Lys306.

This sequence belongs to the FPP/GGPP synthase family. It depends on Mg(2+) as a cofactor. As to expression, restricted to glandular trichomes during achene maturation. Expressed in flowers and in both ray and disk florets.

The protein resides in the plastid. It is found in the chloroplast. The enzyme catalyses 2 dimethylallyl diphosphate = (R,R)-chrysanthemyl diphosphate + diphosphate. It catalyses the reaction (R,R)-chrysanthemyl diphosphate + H2O = (R,R)-chrysanthemol + diphosphate. The catalysed reaction is (R)-lavandulyl diphosphate + H2O = (R)-lavandulol + diphosphate. It participates in isoprenoid biosynthesis. Component of the monoterpenoid pyrethrins biosynthesis; pyrethrins are widely used plant-derived pesticide. Catalyzes the condensation of two molecules of dimethylallyl diphosphate to produce chrysanthemyl diphosphate (CPP), a monoterpene with a non-head-to-tail or irregular c1'-2-3 linkage between isoprenoid units. In a second step, hydrolyzes the diphosphate moiety of CPP to form chrysanthemol. With a lower efficiency, can also converts dimethylallyl diphosphate into lavandulyl diphosphate (LPP), and subsequently LPP into lavandulol. This is Bifunctional chrysanthemol synthase, chloroplastic from Tanacetum cinerariifolium (Dalmatian daisy).